The primary structure comprises 466 residues: Probable ribonuclease FAU-1 (466 aa).

The S1 motif domain occupies 90–152; that stretch reads GAIYAGTVTD…TDGRPVLDTT (63 aa).

This sequence belongs to the FAU-1 family.

Its function is as follows. Probable RNase involved in rRNA stability through maturation and/or degradation of precursor rRNAs. Binds to RNA in loop regions with AU-rich sequences. This Haloarcula marismortui (strain ATCC 43049 / DSM 3752 / JCM 8966 / VKM B-1809) (Halobacterium marismortui) protein is Probable ribonuclease FAU-1.